Reading from the N-terminus, the 209-residue chain is Large ribosomal subunit protein eL13 (209 aa).

It belongs to the eukaryotic ribosomal protein eL13 family. In terms of assembly, component of the 60S large ribosomal subunit (LSU).

It localises to the cytoplasm. Its function is as follows. Component of the ribosome, a large ribonucleoprotein complex responsible for the synthesis of proteins in the cell. The small ribosomal subunit (SSU) binds messenger RNAs (mRNAs) and translates the encoded message by selecting cognate aminoacyl-transfer RNA (tRNA) molecules. The large subunit (LSU) contains the ribosomal catalytic site termed the peptidyl transferase center (PTC), which catalyzes the formation of peptide bonds, thereby polymerizing the amino acids delivered by tRNAs into a polypeptide chain. The nascent polypeptides leave the ribosome through a tunnel in the LSU and interact with protein factors that function in enzymatic processing, targeting, and the membrane insertion of nascent chains at the exit of the ribosomal tunnel. As part of the LSU, it is probably required for its formation and the maturation of rRNAs. This chain is Large ribosomal subunit protein eL13 (rpl13), found in Dictyostelium discoideum (Social amoeba).